The following is a 264-amino-acid chain: Elongation factor Ts (264 aa).

Residues 76 to 79 (TDFV) form an involved in Mg(2+) ion dislocation from EF-Tu region.

The protein belongs to the EF-Ts family.

Its subcellular location is the cytoplasm. Associates with the EF-Tu.GDP complex and induces the exchange of GDP to GTP. It remains bound to the aminoacyl-tRNA.EF-Tu.GTP complex up to the GTP hydrolysis stage on the ribosome. The protein is Elongation factor Ts of Deinococcus radiodurans (strain ATCC 13939 / DSM 20539 / JCM 16871 / CCUG 27074 / LMG 4051 / NBRC 15346 / NCIMB 9279 / VKM B-1422 / R1).